A 251-amino-acid chain; its full sequence is Demethylmenaquinone methyltransferase (251 aa).

Residues T66, D87, and 115-116 each bind S-adenosyl-L-methionine; that span reads NA.

It belongs to the class I-like SAM-binding methyltransferase superfamily. MenG/UbiE family.

The catalysed reaction is a 2-demethylmenaquinol + S-adenosyl-L-methionine = a menaquinol + S-adenosyl-L-homocysteine + H(+). It participates in quinol/quinone metabolism; menaquinone biosynthesis; menaquinol from 1,4-dihydroxy-2-naphthoate: step 2/2. In terms of biological role, methyltransferase required for the conversion of demethylmenaquinol (DMKH2) to menaquinol (MKH2). The sequence is that of Demethylmenaquinone methyltransferase from Symbiobacterium thermophilum (strain DSM 24528 / JCM 14929 / IAM 14863 / T).